A 295-amino-acid chain; its full sequence is Bifunctional protein FolD (295 aa).

Residues 166–168, serine 191, and isoleucine 232 contribute to the NADP(+) site; that span reads GRS.

Belongs to the tetrahydrofolate dehydrogenase/cyclohydrolase family. Homodimer.

The catalysed reaction is (6R)-5,10-methylene-5,6,7,8-tetrahydrofolate + NADP(+) = (6R)-5,10-methenyltetrahydrofolate + NADPH. The enzyme catalyses (6R)-5,10-methenyltetrahydrofolate + H2O = (6R)-10-formyltetrahydrofolate + H(+). Its pathway is one-carbon metabolism; tetrahydrofolate interconversion. Its function is as follows. Catalyzes the oxidation of 5,10-methylenetetrahydrofolate to 5,10-methenyltetrahydrofolate and then the hydrolysis of 5,10-methenyltetrahydrofolate to 10-formyltetrahydrofolate. In Wolbachia sp. subsp. Brugia malayi (strain TRS), this protein is Bifunctional protein FolD.